A 692-amino-acid polypeptide reads, in one-letter code: NAD(P)H-quinone oxidoreductase subunit 5, chloroplastic (692 aa).

17 helical membrane passes run 9–29, 39–59, 89–109, 120–140, 147–167, 184–204, 219–239, 258–278, 289–309, 327–347, 354–374, 395–415, 425–445, 503–523, 555–575, 643–663, and 671–691; these read WFVP…LFFF, LSSF…FHFF, LDPL…MVMI, GYIK…GLVL, VYIF…FWFT, IGDF…GSFD, NQIN…GPVA, TPIS…FLVA, FVMS…ATIA, LGYM…FHLI, ALLF…VGYH, AITF…ACFW, WLHF…TAFY, LFPL…GILF, FLFN…IAFY, WIID…GESL, and ISSY…YSYI.

The protein belongs to the complex I subunit 5 family. NDH is composed of at least 16 different subunits, 5 of which are encoded in the nucleus.

It localises to the plastid. Its subcellular location is the chloroplast thylakoid membrane. The catalysed reaction is a plastoquinone + NADH + (n+1) H(+)(in) = a plastoquinol + NAD(+) + n H(+)(out). The enzyme catalyses a plastoquinone + NADPH + (n+1) H(+)(in) = a plastoquinol + NADP(+) + n H(+)(out). Its function is as follows. NDH shuttles electrons from NAD(P)H:plastoquinone, via FMN and iron-sulfur (Fe-S) centers, to quinones in the photosynthetic chain and possibly in a chloroplast respiratory chain. The immediate electron acceptor for the enzyme in this species is believed to be plastoquinone. Couples the redox reaction to proton translocation, and thus conserves the redox energy in a proton gradient. This is NAD(P)H-quinone oxidoreductase subunit 5, chloroplastic (ndhF) from Marchantia polymorpha (Common liverwort).